Consider the following 577-residue polypeptide: Arginine--tRNA ligase (577 aa).

The 'HIGH' region signature appears at 122–132 (PNVAKEMHVGH).

It belongs to the class-I aminoacyl-tRNA synthetase family. In terms of assembly, monomer.

The protein localises to the cytoplasm. The enzyme catalyses tRNA(Arg) + L-arginine + ATP = L-arginyl-tRNA(Arg) + AMP + diphosphate. The polypeptide is Arginine--tRNA ligase (Citrobacter koseri (strain ATCC BAA-895 / CDC 4225-83 / SGSC4696)).